A 341-amino-acid polypeptide reads, in one-letter code: Dual oxidase maturation factor 1 (341 aa).

At 1–24 (MAALGHTLPFYTGTKPTFPMDTTL) the chain is on the extracellular side. The helical transmembrane segment at 25–45 (AVIITIFLTALVTFIIILPGI) threads the bilayer. At 46–51 (RGKTRL) the chain is on the cytoplasmic side. Residues 52-72 (FWLLRVVTSLFIGAVILAVNF) traverse the membrane as a helical segment. At 73 to 183 (SSEWSVGHVN…RLAGHYASAM (111 aa)) the chain is on the extracellular side. N-linked (GlcNAc...) asparagine glycans are attached at residues Asn-84, Asn-109, and Asn-121. A helical transmembrane segment spans residues 184 to 204 (LWVAFLCWLLANVMLSMPVLV). A topological domain (cytoplasmic) is located at residue Tyr-205. Residues 206 to 226 (GGHMLLATGLFQLLALFFFSM) traverse the membrane as a helical segment. At 227–249 (TTSLISPCPLRLGTAVLHTHHGP) the chain is on the extracellular side. A helical membrane pass occupies residues 250–270 (AFWITLATGLLCILLGLVMAV). The Cytoplasmic portion of the chain corresponds to 271–341 (AHRMQPHRLK…EHPKESDCSL (71 aa)).

Belongs to the DUOXA family. May interact with NUMB.

Its subcellular location is the membrane. Functionally, may be required for the maturation and the transport from the endoplasmic reticulum to the plasma membrane of functional DUOX1. In Mus musculus (Mouse), this protein is Dual oxidase maturation factor 1 (Duoxa1).